The following is a 177-amino-acid chain: ATP synthase subunit delta (177 aa).

The protein belongs to the ATPase delta chain family. As to quaternary structure, F-type ATPases have 2 components, F(1) - the catalytic core - and F(0) - the membrane proton channel. F(1) has five subunits: alpha(3), beta(3), gamma(1), delta(1), epsilon(1). F(0) has three main subunits: a(1), b(2) and c(10-14). The alpha and beta chains form an alternating ring which encloses part of the gamma chain. F(1) is attached to F(0) by a central stalk formed by the gamma and epsilon chains, while a peripheral stalk is formed by the delta and b chains.

The protein localises to the cell inner membrane. F(1)F(0) ATP synthase produces ATP from ADP in the presence of a proton or sodium gradient. F-type ATPases consist of two structural domains, F(1) containing the extramembraneous catalytic core and F(0) containing the membrane proton channel, linked together by a central stalk and a peripheral stalk. During catalysis, ATP synthesis in the catalytic domain of F(1) is coupled via a rotary mechanism of the central stalk subunits to proton translocation. In terms of biological role, this protein is part of the stalk that links CF(0) to CF(1). It either transmits conformational changes from CF(0) to CF(1) or is implicated in proton conduction. This chain is ATP synthase subunit delta, found in Herminiimonas arsenicoxydans.